Consider the following 447-residue polypeptide: Zinc finger protein ZIC 1 (447 aa).

A C2H2-type 1; atypical zinc finger spans residues 225–260 (LICKWIEPEQLANPKKSCNKTFSTMHELVTHVTVEH). The C2H2-type 2; atypical zinc-finger motif lies at 269 to 296 (HICFWEECPREGKPFKAKYKLVNHIRVH). 3 C2H2-type zinc fingers span residues 302-326 (FPCP…KRTH), 332-356 (FKCE…MHVH), and 362-384 (YLCK…MKVH). Positions 375–434 (SSLRKHMKVHESSSQGSQPSPAASSGYESSTPPTIVSPTTDNPTTSSMSPSSSAVHHTAG) are disordered. Residues 386–427 (SSSQGSQPSPAASSGYESSTPPTIVSPTTDNPTTSSMSPSSS) are compositionally biased toward low complexity.

Belongs to the GLI C2H2-type zinc-finger protein family. In terms of assembly, interacts (via the C2H2-type domains 3, 4 and 5) with MDFIC (via the C2H2-type domains 3, 4 and 5). Interacts with GLI1; the interaction enhances transcription activation. Interacts with GLI2. Interacts with GLI3; the interaction enhances transcription activation. As to expression, expressed in osteoblasts (at protein level). Expressed in the CNS. A high level expression is seen in the cerebellum, while a low level expression is seen in the olfactory bulb, diencephalon, and brainstem. Expressed in lumbar spine and iliac crest.

It is found in the nucleus. The protein resides in the cytoplasm. Functionally, acts as a transcriptional activator. Involved in neurogenesis. Plays important roles in the early stage of organogenesis of the CNS, as well as during dorsal spinal cord development and maturation of the cerebellum. Involved in the spatial distribution of mossy fiber (MF) neurons within the pontine gray nucleus (PGN). Plays a role in the regulation of MF axon pathway choice. Promotes MF migration towards ipsilaterally-located cerebellar territories. May have a role in shear flow mechanotransduction in osteocytes. Retains nuclear GLI1 and GLI3 in the cytoplasm. Binds to the minimal GLI-consensus sequence 5'-TGGGTGGTC-3'. This Mus musculus (Mouse) protein is Zinc finger protein ZIC 1 (Zic1).